Consider the following 484-residue polypeptide: UDP-N-acetylmuramate--L-alanine ligase (484 aa).

127 to 133 is an ATP binding site; that stretch reads GTHGKTT.

It belongs to the MurCDEF family.

It is found in the cytoplasm. It carries out the reaction UDP-N-acetyl-alpha-D-muramate + L-alanine + ATP = UDP-N-acetyl-alpha-D-muramoyl-L-alanine + ADP + phosphate + H(+). It functions in the pathway cell wall biogenesis; peptidoglycan biosynthesis. In terms of biological role, cell wall formation. This chain is UDP-N-acetylmuramate--L-alanine ligase, found in Shewanella amazonensis (strain ATCC BAA-1098 / SB2B).